We begin with the raw amino-acid sequence, 280 residues long: 3-methyl-2-oxobutanoate hydroxymethyltransferase (280 aa).

Asp-49 and Asp-88 together coordinate Mg(2+). Residues 49 to 50 (DS), Asp-88, and Lys-118 contribute to the 3-methyl-2-oxobutanoate site. Position 120 (Glu-120) interacts with Mg(2+). Glu-186 acts as the Proton acceptor in catalysis.

This sequence belongs to the PanB family. In terms of assembly, homodecamer; pentamer of dimers. It depends on Mg(2+) as a cofactor.

The protein localises to the cytoplasm. The catalysed reaction is 3-methyl-2-oxobutanoate + (6R)-5,10-methylene-5,6,7,8-tetrahydrofolate + H2O = 2-dehydropantoate + (6S)-5,6,7,8-tetrahydrofolate. The protein operates within cofactor biosynthesis; (R)-pantothenate biosynthesis; (R)-pantoate from 3-methyl-2-oxobutanoate: step 1/2. Its function is as follows. Catalyzes the reversible reaction in which hydroxymethyl group from 5,10-methylenetetrahydrofolate is transferred onto alpha-ketoisovalerate to form ketopantoate. This chain is 3-methyl-2-oxobutanoate hydroxymethyltransferase, found in Ruegeria sp. (strain TM1040) (Silicibacter sp.).